The primary structure comprises 187 residues: Ribosome-recycling factor (187 aa).

The protein belongs to the RRF family.

The protein localises to the cytoplasm. In terms of biological role, responsible for the release of ribosomes from messenger RNA at the termination of protein biosynthesis. May increase the efficiency of translation by recycling ribosomes from one round of translation to another. In Parabacteroides distasonis (strain ATCC 8503 / DSM 20701 / CIP 104284 / JCM 5825 / NCTC 11152), this protein is Ribosome-recycling factor.